Consider the following 140-residue polypeptide: Protein S40-1 (140 aa).

The interval 16–58 (YFPIRRREDGNEKENNRPVDFRENSERVWNKSSRRSKTTPLPS) is disordered. Positions 20–44 (RRREDGNEKENNRPVDFRENSERVW) are enriched in basic and acidic residues.

The protein belongs to the senescence regulator S40 family.

It localises to the cytoplasm. The polypeptide is Protein S40-1 (Arabidopsis thaliana (Mouse-ear cress)).